A 718-amino-acid polypeptide reads, in one-letter code: Catalase-peroxidase (718 aa).

Positions 98–219 (WHAAGTYRMG…LAATEMGLIY (122 aa)) form a cross-link, tryptophyl-tyrosyl-methioninium (Trp-Tyr) (with M-245). The active-site Proton acceptor is the His99. A cross-link (tryptophyl-tyrosyl-methioninium (Tyr-Met) (with W-98)) is located at residues 219-245 (YVNPEGPQASGDPRSAAPFIRATFGNM). His260 serves as a coordination point for heme b.

The protein belongs to the peroxidase family. Peroxidase/catalase subfamily. As to quaternary structure, homodimer or homotetramer. Heme b is required as a cofactor. In terms of processing, formation of the three residue Trp-Tyr-Met cross-link is important for the catalase, but not the peroxidase activity of the enzyme.

The enzyme catalyses H2O2 + AH2 = A + 2 H2O. The catalysed reaction is 2 H2O2 = O2 + 2 H2O. Bifunctional enzyme with both catalase and broad-spectrum peroxidase activity. This is Catalase-peroxidase from Acinetobacter baumannii (strain ACICU).